The chain runs to 504 residues: MGSGSQQKSEKLRSKPPFSEMENFHAQYEMLGTIGHGGSTKVKLARHRLTGTHVAVKMIPKREYWCKPLMSEAELLMMADHPNIISLLQVIETKKKVYLIMELCEGKSLYQHIRNAGYLQEDEARALFKQLLSAINYCRNQGIVHRDLKPDNIMVEKDGRVKIIDFGLGIQVKPGQKLNLFCGTYPFSAPEVLLSRPYDGPKIDVWTLGVVLYFMVTGKIPFDAASIEKLRKQIVAGKYSVPCRLSVKLHHLITLLMTDNPELRPTVAEVMMHPWVTKGSGVFPDPCEEQIPLKPDPAIVKAMGHIGFQAQDIEDSLRQRKFNETMASYCLLKKQLLKECDRPIRAQPMNPSVTPFPSLVDTPTFHLGLRRRETEPTSLRLSANRQMSVCGRSTSKKRDRSFSWPGVLSRPINITPTMDQTHTCTRSVPCINSNFCIIHPNSSDESTEGHTSASAEDKPVRSRGWPRGIKGWTSKIGNAMRKLCCCIPSNETSHLGQRRVSPKK.

Residues 28 to 276 (YEMLGTIGHG…VAEVMMHPWV (249 aa)) form the Protein kinase domain. Residues 34–42 (IGHGGSTKV) and K57 each bind ATP. The active-site Proton acceptor is D147. A UBA domain is found at 294 to 334 (KPDPAIVKAMGHIGFQAQDIEDSLRQRKFNETMASYCLLKK). 2 stretches are compositionally biased toward polar residues: residues 376-393 (PTSLRLSANRQMSVCGRS) and 443-454 (SDESTEGHTSAS). Disordered regions lie at residues 376 to 403 (PTSLRLSANRQMSVCGRSTSKKRDRSFS) and 443 to 469 (SDESTEGHTSASAEDKPVRSRGWPRGI).

Belongs to the protein kinase superfamily. CAMK Ser/Thr protein kinase family. Smok subfamily. Testis-specific. Expressed in the testis from 22 days postpartum (22 dpp).

The enzyme catalyses L-seryl-[protein] + ATP = O-phospho-L-seryl-[protein] + ADP + H(+). It carries out the reaction L-threonyl-[protein] + ATP = O-phospho-L-threonyl-[protein] + ADP + H(+). In terms of biological role, may play a role in sperm motility, especially in the regulation of flagellar function. The sequence is that of Sperm motility kinase 2A (Smok2a) from Mus musculus (Mouse).